The chain runs to 283 residues: Pantothenate synthetase (283 aa).

ATP is bound at residue 30–37; the sequence is MGNLHDGH. H37 functions as the Proton donor in the catalytic mechanism. Q61 provides a ligand contact to (R)-pantoate. A beta-alanine-binding site is contributed by Q61. Position 149 to 152 (149 to 152) interacts with ATP; the sequence is GEKD. Q155 is a (R)-pantoate binding site. 186–189 lines the ATP pocket; it reads LSSR.

The protein belongs to the pantothenate synthetase family. Homodimer.

It localises to the cytoplasm. The catalysed reaction is (R)-pantoate + beta-alanine + ATP = (R)-pantothenate + AMP + diphosphate + H(+). The protein operates within cofactor biosynthesis; (R)-pantothenate biosynthesis; (R)-pantothenate from (R)-pantoate and beta-alanine: step 1/1. Catalyzes the condensation of pantoate with beta-alanine in an ATP-dependent reaction via a pantoyl-adenylate intermediate. The protein is Pantothenate synthetase of Escherichia coli O17:K52:H18 (strain UMN026 / ExPEC).